Here is a 966-residue protein sequence, read N- to C-terminus: Mitogen-activated protein kinase kinase kinase 13 (966 aa).

Disordered regions lie at residues 1 to 22, 30 to 49, and 90 to 114; these read MANF…SESK, ELTA…QQEK, and HDES…SGTE. A compositionally biased stretch (polar residues) spans 95–113; the sequence is TAVSQGNSNTVDGESTSGT. In terms of domain architecture, Protein kinase spans 168 to 409; it reads ISELQWLGSG…FRQTLMHLDI (242 aa). ATP contacts are provided by residues 174 to 182 and Lys195; that span reads LGSGAQGAV. Asp279 serves as the catalytic Proton acceptor. 2 leucine-zipper regions span residues 433–454 and 486–507; these read VKKH…DEEL and LSAI…EQAV. Disordered regions lie at residues 534-599, 611-655, 744-834, and 846-908; these read KRKG…RGSH, AQEN…HHPR, DIPS…RRQR, and STFS…GLSD. Over residues 567 to 581 the composition is skewed to low complexity; the sequence is SPLSGSPKMSTSSSK. Basic residues predominate over residues 582 to 594; sequence SRYRSKPRHRRGN. Polar residues-rich tracts occupy residues 611 to 629 and 785 to 795; these read AQEN…SQYP and RSESSLGTSHL. The segment covering 814 to 827 has biased composition (acidic residues); it reads DSSEEEEGEVDSEV. The acidic stretch occupies residues 815–828; that stretch reads SSEEEEGEVDSEVE. Polar residues predominate over residues 846-855; the sequence is STFSSENFSV. Residues 873 to 887 are compositionally biased toward basic and acidic residues; sequence LADKLEDRLAEKLDD.

This sequence belongs to the protein kinase superfamily. STE Ser/Thr protein kinase family. MAP kinase kinase kinase subfamily. As to quaternary structure, homodimer; forms dimers through the leucine-zipper motif. Interacts with the C-terminus of MAPK8IP1 through the kinase catalytic domain. Binds PRDX3. Associates with the IKK complex through the kinase domain. Mg(2+) serves as cofactor. Post-translationally, autophosphorylated on serine and threonine residues. As to expression, expressed in the adult brain, liver, placenta and pancreas, with expression strongest in the pancreas.

The protein localises to the cytoplasm. Its subcellular location is the membrane. It carries out the reaction L-seryl-[protein] + ATP = O-phospho-L-seryl-[protein] + ADP + H(+). It catalyses the reaction L-threonyl-[protein] + ATP = O-phospho-L-threonyl-[protein] + ADP + H(+). Its activity is regulated as follows. Activated by autophosphorylation and homodimerization. Functionally, activates the JUN N-terminal pathway through activation of the MAP kinase kinase MAP2K7. Acts synergistically with PRDX3 to regulate the activation of NF-kappa-B in the cytosol. This activation is kinase-dependent and involves activating the IKK complex, the IKBKB-containing complex that phosphorylates inhibitors of NF-kappa-B. This chain is Mitogen-activated protein kinase kinase kinase 13, found in Homo sapiens (Human).